The following is a 269-amino-acid chain: Ribosomal RNA small subunit methyltransferase A (269 aa).

Residues asparagine 18, leucine 20, glycine 45, glutamate 66, aspartate 91, and asparagine 112 each contribute to the S-adenosyl-L-methionine site.

Belongs to the class I-like SAM-binding methyltransferase superfamily. rRNA adenine N(6)-methyltransferase family. RsmA subfamily.

The protein resides in the cytoplasm. It catalyses the reaction adenosine(1518)/adenosine(1519) in 16S rRNA + 4 S-adenosyl-L-methionine = N(6)-dimethyladenosine(1518)/N(6)-dimethyladenosine(1519) in 16S rRNA + 4 S-adenosyl-L-homocysteine + 4 H(+). In terms of biological role, specifically dimethylates two adjacent adenosines (A1518 and A1519) in the loop of a conserved hairpin near the 3'-end of 16S rRNA in the 30S particle. May play a critical role in biogenesis of 30S subunits. The protein is Ribosomal RNA small subunit methyltransferase A of Vibrio parahaemolyticus serotype O3:K6 (strain RIMD 2210633).